Here is a 228-residue protein sequence, read N- to C-terminus: Ankyrin repeat domain-containing protein 46 (228 aa).

ANK repeat units follow at residues 11-40, 44-73, 77-103, and 107-138; these read QTNV…DPNI, RGRT…DLLA, QGNT…KIDI, and QGAT…EVKG. Residues 195–215 traverse the membrane as a helical segment; that stretch reads VLLLIFVIALLSLGIAYYVSG.

The protein localises to the membrane. The protein is Ankyrin repeat domain-containing protein 46 (ANKRD46) of Bos taurus (Bovine).